We begin with the raw amino-acid sequence, 430 residues long: Mannan endo-1,4-beta-mannosidase (430 aa).

Glu-173 acts as the Proton donor in catalysis. Residue Glu-269 is the Nucleophile of the active site. CBM10 domains are found at residues 357–390 (SCGT…CVVA) and 395–424 (SCNW…CIAA).

The protein belongs to the glycosyl hydrolase 5 (cellulase A) family.

It carries out the reaction Random hydrolysis of (1-&gt;4)-beta-D-mannosidic linkages in mannans, galactomannans and glucomannans.. In terms of biological role, catalyzes the endo hydrolysis of beta-1,4-linked mannan, galactomannan and glucomannan. It is able to hydrolyze mannosidic linkages that are flanked by mannose or glucose. The chain is Mannan endo-1,4-beta-mannosidase from Cellvibrio japonicus (strain Ueda107) (Pseudomonas fluorescens subsp. cellulosa).